The chain runs to 197 residues: Ribonuclease HII (197 aa).

Residues 7–197 enclose the RNase H type-2 domain; the sequence is LGIAGVDEVG…SFLRKLFATV (191 aa). A divalent metal cation is bound by residues Asp13, Glu14, and Asp109.

The protein belongs to the RNase HII family. Mn(2+) serves as cofactor. It depends on Mg(2+) as a cofactor.

The protein resides in the cytoplasm. The enzyme catalyses Endonucleolytic cleavage to 5'-phosphomonoester.. Its function is as follows. Endonuclease that specifically degrades the RNA of RNA-DNA hybrids. This is Ribonuclease HII from Synechococcus sp. (strain CC9311).